Consider the following 273-residue polypeptide: Putative B3 domain-containing protein At5g58280 (273 aa).

Positions 127–218 (FVKSMVRSHV…KFKIYVFKGN (92 aa)) form a DNA-binding region, TF-B3. Positions 225 to 273 (SARKRGRATTPSEEEEEEEDKDVEESGDEEHSSRATKRSSVRLLRKRKA) are disordered. Residues 236–252 (SEEEEEEEDKDVEESGD) show a composition bias toward acidic residues. Over residues 258-273 (RATKRSSVRLLRKRKA) the composition is skewed to basic residues.

It localises to the nucleus. This is Putative B3 domain-containing protein At5g58280 from Arabidopsis thaliana (Mouse-ear cress).